We begin with the raw amino-acid sequence, 255 residues long: Probable pyridoxal 5'-phosphate synthase subunit PDX2 (255 aa).

L-glutamine is bound at residue 46-48 (GES). Cys78 functions as the Nucleophile in the catalytic mechanism. L-glutamine is bound by residues Arg108 and 142-143 (IR). Catalysis depends on charge relay system residues His202 and Glu204. A disordered region spans residues 225 to 255 (GASSSSSKTIVSVGETSAGPEPAKPDLPIFQ).

This sequence belongs to the glutaminase PdxT/SNO family. Interacts with PDX1.1 or PDX1.3, but not with PDX1.2. Binds to RPA2A. As to expression, strongly expressed in roots, stems, leaves and flowers.

It is found in the cytoplasm. The enzyme catalyses aldehydo-D-ribose 5-phosphate + D-glyceraldehyde 3-phosphate + L-glutamine = pyridoxal 5'-phosphate + L-glutamate + phosphate + 3 H2O + H(+). The catalysed reaction is L-glutamine + H2O = L-glutamate + NH4(+). Its pathway is cofactor biosynthesis; pyridoxal 5'-phosphate biosynthesis. Catalyzes the hydrolysis of glutamine to glutamate and ammonia as part of the biosynthesis of pyridoxal 5'-phosphate. The resulting ammonia molecule is channeled to the active site of PDX1. Involved in the indirect resistance to singlet oxygen-generating photosensitizers. This chain is Probable pyridoxal 5'-phosphate synthase subunit PDX2 (PDX2), found in Arabidopsis thaliana (Mouse-ear cress).